The chain runs to 187 residues: Transmembrane protein 17A (187 aa).

4 consecutive transmembrane segments (helical) span residues 49–69 (IFLYFNAFYFPFWWVCYVIML), 82–102 (FILVVLLILMSVIEVIRLYLG), 114–134 (LAGFCLLSILLQLPLLLFLLC), and 146–166 (AVHGILTAFLLIQIPISIFAL).

It belongs to the TMEM17 family. As to quaternary structure, part of the tectonic-like complex (also named B9 complex).

The protein localises to the cell projection. The protein resides in the cilium membrane. In terms of biological role, transmembrane component of the tectonic-like complex, a complex localized at the transition zone of primary cilia and acting as a barrier that prevents diffusion of transmembrane proteins between the cilia and plasma membranes. Required for ciliogenesis and sonic hedgehog/SHH signaling. In Xenopus tropicalis (Western clawed frog), this protein is Transmembrane protein 17A (tmem17-a).